Reading from the N-terminus, the 284-residue chain is Bifunctional protein FolD (284 aa).

Residues Gly-165–Ser-167 and Ser-190 contribute to the NADP(+) site.

This sequence belongs to the tetrahydrofolate dehydrogenase/cyclohydrolase family. Homodimer.

The enzyme catalyses (6R)-5,10-methylene-5,6,7,8-tetrahydrofolate + NADP(+) = (6R)-5,10-methenyltetrahydrofolate + NADPH. It catalyses the reaction (6R)-5,10-methenyltetrahydrofolate + H2O = (6R)-10-formyltetrahydrofolate + H(+). Its pathway is one-carbon metabolism; tetrahydrofolate interconversion. Catalyzes the oxidation of 5,10-methylenetetrahydrofolate to 5,10-methenyltetrahydrofolate and then the hydrolysis of 5,10-methenyltetrahydrofolate to 10-formyltetrahydrofolate. This Streptococcus gordonii (strain Challis / ATCC 35105 / BCRC 15272 / CH1 / DL1 / V288) protein is Bifunctional protein FolD.